The sequence spans 337 residues: Protein BIG GRAIN 1-like (337 aa).

Disordered stretches follow at residues 1–32 (MRDMEMRWAAPAPAARGRGRARRRAPDQPSFS), 120–163 (SAAG…RPAS), and 179–235 (KRPS…PSRS). Over residues 137–146 (HEQPDVEKTA) the composition is skewed to basic and acidic residues. 2 stretches are compositionally biased toward low complexity: residues 150-163 (PGSASARACRRPAS) and 195-209 (PACSTAPPSSSSSYA).

It belongs to the BIG GRAIN 1 (BG1) plant protein family.

It localises to the cell membrane. Functionally, involved in auxin transport. Regulator of the auxin signaling pathway. This chain is Protein BIG GRAIN 1-like, found in Oryza sativa subsp. japonica (Rice).